Consider the following 444-residue polypeptide: Adenylosuccinate lyase (444 aa).

N(6)-(1,2-dicarboxyethyl)-AMP is bound by residues 9 to 10 (RY), 73 to 75 (KHD), and 97 to 98 (TS). Residue His-145 is the Proton donor/acceptor of the active site. Residue Gln-219 coordinates N(6)-(1,2-dicarboxyethyl)-AMP. Ser-269 acts as the Proton donor/acceptor in catalysis. N(6)-(1,2-dicarboxyethyl)-AMP-binding positions include Ser-270, 275 to 277 (KRN), Asn-283, and 314 to 318 (SAERI).

The protein belongs to the lyase 1 family. Adenylosuccinate lyase subfamily. In terms of assembly, homotetramer. Residues from neighboring subunits contribute catalytic and substrate-binding residues to each active site.

The enzyme catalyses N(6)-(1,2-dicarboxyethyl)-AMP = fumarate + AMP. It catalyses the reaction (2S)-2-[5-amino-1-(5-phospho-beta-D-ribosyl)imidazole-4-carboxamido]succinate = 5-amino-1-(5-phospho-beta-D-ribosyl)imidazole-4-carboxamide + fumarate. It functions in the pathway purine metabolism; AMP biosynthesis via de novo pathway; AMP from IMP: step 2/2. The protein operates within purine metabolism; IMP biosynthesis via de novo pathway; 5-amino-1-(5-phospho-D-ribosyl)imidazole-4-carboxamide from 5-amino-1-(5-phospho-D-ribosyl)imidazole-4-carboxylate: step 2/2. In terms of biological role, catalyzes two reactions in de novo purine nucleotide biosynthesis. Catalyzes the breakdown of 5-aminoimidazole- (N-succinylocarboxamide) ribotide (SAICAR or 2-[5-amino-1-(5-phospho-beta-D-ribosyl)imidazole-4-carboxamido]succinate) to 5-aminoimidazole-4-carboxamide ribotide (AICAR or 5-amino-1-(5-phospho-beta-D-ribosyl)imidazole-4-carboxamide) and fumarate, and of adenylosuccinate (ADS or N(6)-(1,2-dicarboxyethyl)-AMP) to adenosine monophosphate (AMP) and fumarate. The chain is Adenylosuccinate lyase (purB) from Archaeoglobus fulgidus (strain ATCC 49558 / DSM 4304 / JCM 9628 / NBRC 100126 / VC-16).